A 356-amino-acid chain; its full sequence is Protein RecA (356 aa).

67-74 (GPESSGKT) is an ATP binding site.

The protein belongs to the RecA family.

It is found in the cytoplasm. Functionally, can catalyze the hydrolysis of ATP in the presence of single-stranded DNA, the ATP-dependent uptake of single-stranded DNA by duplex DNA, and the ATP-dependent hybridization of homologous single-stranded DNAs. It interacts with LexA causing its activation and leading to its autocatalytic cleavage. The polypeptide is Protein RecA (Yersinia pestis bv. Antiqua (strain Angola)).